The primary structure comprises 412 residues: Light-independent protochlorophyllide reductase subunit N (412 aa).

3 residues coordinate [4Fe-4S] cluster: Cys17, Cys42, and Cys103.

The protein belongs to the BchN/ChlN family. In terms of assembly, protochlorophyllide reductase is composed of three subunits; ChlL, ChlN and ChlB. Forms a heterotetramer of two ChlB and two ChlN subunits. [4Fe-4S] cluster serves as cofactor.

It carries out the reaction chlorophyllide a + oxidized 2[4Fe-4S]-[ferredoxin] + 2 ADP + 2 phosphate = protochlorophyllide a + reduced 2[4Fe-4S]-[ferredoxin] + 2 ATP + 2 H2O. Its pathway is porphyrin-containing compound metabolism; chlorophyll biosynthesis (light-independent). In terms of biological role, component of the dark-operative protochlorophyllide reductase (DPOR) that uses Mg-ATP and reduced ferredoxin to reduce ring D of protochlorophyllide (Pchlide) to form chlorophyllide a (Chlide). This reaction is light-independent. The NB-protein (ChlN-ChlB) is the catalytic component of the complex. In Synechococcus sp. (strain CC9902), this protein is Light-independent protochlorophyllide reductase subunit N.